The primary structure comprises 715 residues: Discoidin, CUB and LCCL domain-containing protein 1 (715 aa).

A signal peptide spans 1–34; sequence MVPGARGGGALARAAGRGLLALLLAVSAPLRLQA. Residues 35 to 459 lie on the Extracellular side of the membrane; it reads EELGDGCGHL…TSTGINITTV (425 aa). Disulfide bonds link Cys-41–Cys-68 and Cys-94–Cys-112. One can recognise a CUB domain in the interval 41-150; that stretch reads CGHLVTYQDS…RGFLLTYASS (110 aa). Asn-64 carries an N-linked (GlcNAc...) asparagine glycan. A glycan (N-linked (GlcNAc...) asparagine) is linked at Asn-124. The LCCL domain maps to 152-248; sequence HPDLITCLER…RDGSLSDKRF (97 aa). 2 disulfides stabilise this stretch: Cys-158/Cys-174 and Cys-178/Cys-200. The region spanning 248–412 is the F5/8 type C domain; sequence FLFTSNGCSR…IALKVELIGC (165 aa). N-linked (GlcNAc...) asparagine glycosylation occurs at Asn-277. Residues 278–312 form a disordered region; it reads ESGDQVHWSPGQARLQDQGPSWASGDSSNNHKPRE. Positions 295–307 are enriched in polar residues; sequence QGPSWASGDSSNN. N-linked (GlcNAc...) asparagine glycans are attached at residues Asn-351, Asn-418, and Asn-455. Residues 460-480 traverse the membrane as a helical segment; sequence AIPLVLLVVLVFAGMGIFAAF. The Cytoplasmic portion of the chain corresponds to 481 to 715; it reads RKKKKKGSPY…LNQTAMTALL (235 aa). Position 513 is a phosphoserine (Ser-513). Thr-614 is subject to Phosphothreonine. Residues 619–702 are disordered; sequence SGYRVPGPQP…SDSYSAPRDC (84 aa).

It localises to the membrane. The chain is Discoidin, CUB and LCCL domain-containing protein 1 (DCBLD1) from Homo sapiens (Human).